We begin with the raw amino-acid sequence, 170 residues long: Cathelicidin antimicrobial peptide (170 aa).

Positions 1 to 30 are cleaved as a signal peptide; that stretch reads MKTQRDSPSLGRWSLVLLLLGLVMPLAIVA. Residues 31–131 constitute a propeptide, cathelin-like domain (CLD); sequence QVLSYQEAVL…DISCDKDNRR (101 aa). 2 disulfides stabilise this stretch: cysteine 86–cysteine 97 and cysteine 108–cysteine 125. The active core stretch occupies residues 150–162; that stretch reads FKRIVQRIKDFLQ.

The protein belongs to the cathelicidin family. As to quaternary structure, monomer, homodimer or homotrimer (in vitro). Oligomerizes as tetra- or hexamer in solution (in vitro). In terms of processing, proteolytically cleaved by proteinase PRTN3 into antibacterial peptide LL-37. Proteolytically cleaved by cathepsin CTSG and neutrophil elastase ELANE. Resistant to proteolytic degradation in solution, and when bound to both zwitterionic (mimicking mammalian membranes) and negatively charged membranes (mimicking bacterial membranes). Post-translationally, after secretion onto the skin surface, the CAMP gene product is processed by a serine protease-dependent mechanism into multiple novel antimicrobial peptides distinct from and shorter than cathelicidin LL-37. These peptides show enhanced antimicrobial action, acquiring the ability to kill skin pathogens such as S.aureus, E.coli and C.albicans. These peptides have lost the ability to stimulate CXCL8/IL8 release from keratinocytes. The peptides act synergistically, killing bacteria at lower concentrations when present together, and maintain activity at increased salt condition.

It is found in the secreted. The protein localises to the vesicle. Its function is as follows. Antimicrobial protein that is an integral component of the innate immune system. Binds to bacterial lipopolysaccharides (LPS). Acts via neutrophil N-formyl peptide receptors to enhance the release of CXCL2. Postsecretory processing generates multiple cathelicidin antimicrobial peptides with various lengths which act as a topical antimicrobial defense in sweat on skin. The unprocessed precursor form, cathelicidin antimicrobial peptide, inhibits the growth of Gram-negative E.coli and E.aerogenes with efficiencies comparable to that of the mature peptide LL-37 (in vitro). Functionally, antimicrobial peptide that is an integral component of the innate immune system. Binds to bacterial lipopolysaccharides (LPS). Causes membrane permeabilization by forming transmembrane pores (in vitro). Causes lysis of E.coli. Exhibits antimicrobial activity against Gram-negative bacteria such as P.aeruginosa, S.typhimurium, E.aerogenes, E.coli and P.syringae, Gram-positive bacteria such as L.monocytogenes, S.epidermidis, S.pyogenes and S.aureus, as well as vancomycin-resistant enterococci (in vitro). Exhibits antimicrobial activity against methicillin-resistant S.aureus, P.mirabilis, and C.albicans in low-salt media, but not in media containing 100 mM NaCl (in vitro). Forms chiral supramolecular assemblies with quinolone signal (PQS) molecules of P.aeruginosa, which may lead to interference of bacterial quorum signaling and perturbance of bacterial biofilm formation. May form supramolecular fiber-like assemblies on bacterial membranes. Induces cytokine and chemokine producation as well as TNF/TNFA and CSF2/GMCSF production in normal human keratinocytes. Exhibits hemolytic activity against red blood cells. In terms of biological role, exhibits antimicrobial activity against E.coli and B.megaterium (in vitro). The chain is Cathelicidin antimicrobial peptide from Nomascus concolor (Black crested gibbon).